The chain runs to 899 residues: Solute carrier family 12 member 9 (899 aa).

Over 1 to 42 (MANEHSPLLVHGVYSMMGNAEDSRGGSAGTGEASNPKTDPRK) the chain is Cytoplasmic. Residues 43 to 63 (LNTFFGVMVPTILSMFSIVLF) form a helical membrane-spanning segment. The Extracellular segment spans residues 64 to 78 (LRTGFVVGHAGLLHG). A helical membrane pass occupies residues 79–99 (LLMLFVAYFIISLTILSICAI). Over 100 to 125 (STNGAVEGGGAYFMISRSLGPEFGGS) the chain is Cytoplasmic. The chain crosses the membrane as a helical span at residues 126–146 (IGLMFYLAKVCACGVYVLGLV). Over 147 to 175 (EAIMDVFGQDPGSSVAQGLRVLPQGYWYT) the chain is Extracellular. The chain crosses the membrane as a helical span at residues 176-196 (VLYSSVVLLLCMLVCLVGAHI). The Cytoplasmic portion of the chain corresponds to 197 to 201 (YAKAS). A helical transmembrane segment spans residues 202–222 (FLILLVVTVSLISIIISPLIV). Residues 223-269 (SPQGFNITHTYGNNHSVTVSPSYTGFNSTTLKNNLGPRYSLDYSTNT) are Extracellular-facing. N-linked (GlcNAc...) asparagine glycans are attached at residues N228, N236, and N249. The helical transmembrane segment at 270-290 (MMSFATVFAVMFTSCTGIMAG) threads the bilayer. The Cytoplasmic portion of the chain corresponds to 291-306 (ANMSGELKNPSESIPK). A helical transmembrane segment spans residues 307 to 327 (GTIMAVAYTFTVYVLLYLLLS). Residues 328 to 350 (STCDRSLLLNDYAVFQRVNVWPP) are Extracellular-facing. A helical transmembrane segment spans residues 351-371 (FVTIGVYCASLSAAMCSMIGA). Over 372-373 (SR) the chain is Cytoplasmic. A helical transmembrane segment spans residues 374-394 (ILHALALDQLFGLPLAPAAVT). Residues 395–399 (SSSGN) are Extracellular-facing. The helical transmembrane segment at 400–420 (PWVSVLYTWALVQCTLFAGQL) threads the bilayer. Position 421 (N421) is a topological domain, cytoplasmic. The chain crosses the membrane as a helical span at residues 422-442 (VIAGIVTVFYLLAYAAVDLAC). Topologically, residues 443–455 (LALEWASAPNFRP) are extracellular. The chain crosses the membrane as a helical span at residues 456-476 (TFQFFSWHTCLLGIISCVVMM). Topologically, residues 477–487 (FVINPVYSSAS) are extracellular. A helical transmembrane segment spans residues 488–510 (IVLLLLLLLFLHYRSPTSSWGYI). The Cytoplasmic portion of the chain corresponds to 511-563 (SQALIFHQVRKYLLMLDSRKDHVKFWRPQVLLMVSNPRSSCQLICFVNQLKKG). A helical membrane pass occupies residues 564-584 (GLFVLGHVQIGDLDVLPADPV). Over 585 to 749 (QPQYNFWLSL…NLLTPGSASY (165 aa)) the chain is Extracellular. A helical membrane pass occupies residues 750–770 (ADVGSLFLLQMACVLNMASGW). At 771 to 899 (RRARLRIFVC…GVTPVTCTEL (129 aa)) the chain is on the cytoplasmic side.

This sequence belongs to the SLC12A transporter family.

The protein resides in the cell membrane. The protein localises to the lysosome membrane. Its function is as follows. Seems to correspond to a subunit of a multimeric transport system and thus, additional subunits may be required for its function. May play a role in lysosomal ion flux and osmoregulation. The sequence is that of Solute carrier family 12 member 9 (slc12a9) from Danio rerio (Zebrafish).